We begin with the raw amino-acid sequence, 611 residues long: Large ribosomal subunit assembly factor BipA (611 aa).

A tr-type G domain is found at 7-202; the sequence is KNLRNIAIIA…AIVKYTPPPT (196 aa). GTP contacts are provided by residues 19-24 and 132-135; these read DHGKTT and NKID.

Belongs to the TRAFAC class translation factor GTPase superfamily. Classic translation factor GTPase family. BipA subfamily. Monomer.

It localises to the cytoplasm. The enzyme catalyses GTP + H2O = GDP + phosphate + H(+). Functionally, a 50S ribosomal subunit assembly protein with GTPase activity, required for 50S subunit assembly at low temperatures, may also play a role in translation. Binds GTP and analogs. Binds the 70S ribosome between the 30S and 50S subunits, in a similar position as ribosome-bound EF-G; it contacts a number of ribosomal proteins, both rRNAs and the A-site tRNA. This Buchnera aphidicola subsp. Baizongia pistaciae (strain Bp) protein is Large ribosomal subunit assembly factor BipA.